Consider the following 385-residue polypeptide: 1-deoxy-D-xylulose 5-phosphate reductoisomerase (385 aa).

8 residues coordinate NADPH: Thr11, Gly12, Ser13, Ile14, Ala37, Arg38, Asn39, and Asn123. Residue Lys124 coordinates 1-deoxy-D-xylulose 5-phosphate. Residue Glu125 coordinates NADPH. Asp149 contacts Mn(2+). Positions 150, 151, 173, and 196 each coordinate 1-deoxy-D-xylulose 5-phosphate. Position 151 (Glu151) interacts with Mn(2+). Gly202 provides a ligand contact to NADPH. 4 residues coordinate 1-deoxy-D-xylulose 5-phosphate: Ser209, Asn214, Lys215, and Glu218. Position 218 (Glu218) interacts with Mn(2+).

This sequence belongs to the DXR family. Requires Mg(2+) as cofactor. Mn(2+) is required as a cofactor.

It carries out the reaction 2-C-methyl-D-erythritol 4-phosphate + NADP(+) = 1-deoxy-D-xylulose 5-phosphate + NADPH + H(+). It functions in the pathway isoprenoid biosynthesis; isopentenyl diphosphate biosynthesis via DXP pathway; isopentenyl diphosphate from 1-deoxy-D-xylulose 5-phosphate: step 1/6. Catalyzes the NADPH-dependent rearrangement and reduction of 1-deoxy-D-xylulose-5-phosphate (DXP) to 2-C-methyl-D-erythritol 4-phosphate (MEP). The protein is 1-deoxy-D-xylulose 5-phosphate reductoisomerase of Moorella thermoacetica (strain ATCC 39073 / JCM 9320).